The chain runs to 77 residues: Putative defensin-like protein 129 (77 aa).

The N-terminal stretch at 1–25 (MTKNTALTIFMVVLVIEMVMEETQG) is a signal peptide. 4 disulfide bridges follow: Cys-28–Cys-77, Cys-37–Cys-59, Cys-42–Cys-71, and Cys-46–Cys-73.

It belongs to the DEFL family.

It is found in the secreted. This Arabidopsis thaliana (Mouse-ear cress) protein is Putative defensin-like protein 129 (LCR13).